The primary structure comprises 191 residues: Probable DNA-directed RNA polymerase subunit delta (191 aa).

Residues 14 to 83 (LSMIEVARAI…GENKWGLRSW (70 aa)) form the HTH HARE-type domain. Composition is skewed to acidic residues over residues 117 to 136 (GDED…DFTE) and 142 to 191 (EYDE…EEEV). Residues 117–191 (GDEDAIDYND…DEEEEEEEEV (75 aa)) are disordered.

The protein belongs to the RpoE family. In terms of assembly, RNAP is composed of a core of 2 alpha, a beta and a beta' subunits. The core is associated with a delta subunit and one of several sigma factors.

In terms of biological role, participates in both the initiation and recycling phases of transcription. In the presence of the delta subunit, RNAP displays an increased specificity of transcription, a decreased affinity for nucleic acids, and an increased efficiency of RNA synthesis because of enhanced recycling. The sequence is that of Probable DNA-directed RNA polymerase subunit delta from Streptococcus agalactiae serotype Ia (strain ATCC 27591 / A909 / CDC SS700).